The sequence spans 586 residues: MNVYAIFADHVREAVAALVAEGIIAKDLDLARVVVEPPRDASHGDLATNAAMVLAKDAGLKPRELAERIAGKLGTVAGVKKVDVAGPGFINIALDGTFWPVVLAAVLTQGLDFGRSALGAGEKVNVEYVSANPTGPMHVGHCRGAVFGDALARLMDFAGFAVTKEYYINDAGAQVDVLARSAFLRYREALGEAIGEIPEGLYPGDYLVPVGQKLAAAHGPALKEKSETDWLPLVRAEAIATMMVAIREDLAALGISFDVFFSERSLSTGAVDRVGAAIEALRASGEVYEGRLPPPKGAPIEDWEDREQTLFRSTDFGDDVDRPLKKSDGSYTYFAGDIAYHKDKVDRGFLKMIDVWGADHGGYVKRMQAAVKAVSGGRATLDVELIQLVRLFRAGEPVRMSKRSGSFVTLREVVDEVGRDAVRFMMLFRKNDAPLDFDLAKVIEQSRENPVFYVQYAHARAKSILRNAAEEFADLPQQAASFATAPLARLDDEGEITLLRRLASWPRLVEQAAGAREPHRISFFLHELASEFHGQWNRGKDLPHLRFIIENDRELTSARLALVHGVATVLASGLKVLGVTAVDEMK.

Residues 131-141 (ANPTGPMHVGH) carry the 'HIGH' region motif.

It belongs to the class-I aminoacyl-tRNA synthetase family. Monomer.

The protein resides in the cytoplasm. The catalysed reaction is tRNA(Arg) + L-arginine + ATP = L-arginyl-tRNA(Arg) + AMP + diphosphate. This chain is Arginine--tRNA ligase, found in Xanthobacter autotrophicus (strain ATCC BAA-1158 / Py2).